The following is a 479-amino-acid chain: Pup--protein ligase (479 aa).

Glu17 contacts Mg(2+). An ATP-binding site is contributed by Arg62. A Mg(2+)-binding site is contributed by Tyr64. Asp66 functions as the Proton acceptor in the catalytic mechanism. Residue Glu72 participates in Mg(2+) binding. Positions 75 and 432 each coordinate ATP.

It belongs to the Pup ligase/Pup deamidase family. Pup-conjugating enzyme subfamily.

The enzyme catalyses ATP + [prokaryotic ubiquitin-like protein]-L-glutamate + [protein]-L-lysine = ADP + phosphate + N(6)-([prokaryotic ubiquitin-like protein]-gamma-L-glutamyl)-[protein]-L-lysine.. The protein operates within protein degradation; proteasomal Pup-dependent pathway. Its pathway is protein modification; protein pupylation. Catalyzes the covalent attachment of the prokaryotic ubiquitin-like protein modifier Pup to the proteasomal substrate proteins, thereby targeting them for proteasomal degradation. This tagging system is termed pupylation. The ligation reaction involves the side-chain carboxylate of the C-terminal glutamate of Pup and the side-chain amino group of a substrate lysine. This chain is Pup--protein ligase, found in Corynebacterium diphtheriae (strain ATCC 700971 / NCTC 13129 / Biotype gravis).